The primary structure comprises 185 residues: Elongation factor P (185 aa).

Belongs to the elongation factor P family.

Its subcellular location is the cytoplasm. It functions in the pathway protein biosynthesis; polypeptide chain elongation. Functionally, involved in peptide bond synthesis. Stimulates efficient translation and peptide-bond synthesis on native or reconstituted 70S ribosomes in vitro. Probably functions indirectly by altering the affinity of the ribosome for aminoacyl-tRNA, thus increasing their reactivity as acceptors for peptidyl transferase. The protein is Elongation factor P of Alkaliphilus oremlandii (strain OhILAs) (Clostridium oremlandii (strain OhILAs)).